The following is a 147-amino-acid chain: Nucleoside diphosphate kinase (147 aa).

Residues lysine 9, phenylalanine 57, arginine 85, threonine 91, arginine 102, and asparagine 112 each coordinate ATP. Histidine 115 (pros-phosphohistidine intermediate) is an active-site residue.

It belongs to the NDK family. Homotetramer. Mg(2+) is required as a cofactor.

It localises to the cytoplasm. It carries out the reaction a 2'-deoxyribonucleoside 5'-diphosphate + ATP = a 2'-deoxyribonucleoside 5'-triphosphate + ADP. It catalyses the reaction a ribonucleoside 5'-diphosphate + ATP = a ribonucleoside 5'-triphosphate + ADP. Functionally, major role in the synthesis of nucleoside triphosphates other than ATP. The ATP gamma phosphate is transferred to the NDP beta phosphate via a ping-pong mechanism, using a phosphorylated active-site intermediate. This is Nucleoside diphosphate kinase from Brevibacillus brevis (strain 47 / JCM 6285 / NBRC 100599).